The sequence spans 352 residues: S-adenosylmethionine:tRNA ribosyltransferase-isomerase (352 aa).

It belongs to the QueA family. Monomer.

It localises to the cytoplasm. The enzyme catalyses 7-aminomethyl-7-carbaguanosine(34) in tRNA + S-adenosyl-L-methionine = epoxyqueuosine(34) in tRNA + adenine + L-methionine + 2 H(+). It functions in the pathway tRNA modification; tRNA-queuosine biosynthesis. Its function is as follows. Transfers and isomerizes the ribose moiety from AdoMet to the 7-aminomethyl group of 7-deazaguanine (preQ1-tRNA) to give epoxyqueuosine (oQ-tRNA). The sequence is that of S-adenosylmethionine:tRNA ribosyltransferase-isomerase from Bacteroides fragilis (strain ATCC 25285 / DSM 2151 / CCUG 4856 / JCM 11019 / LMG 10263 / NCTC 9343 / Onslow / VPI 2553 / EN-2).